A 125-amino-acid chain; its full sequence is UPF0102 protein PA4424 (125 aa).

It belongs to the UPF0102 family.

The polypeptide is UPF0102 protein PA4424 (Pseudomonas aeruginosa (strain ATCC 15692 / DSM 22644 / CIP 104116 / JCM 14847 / LMG 12228 / 1C / PRS 101 / PAO1)).